Reading from the N-terminus, the 373-residue chain is Sterol-4-alpha-carboxylate 3-dehydrogenase, decarboxylating (373 aa).

An N-acetylmethionine modification is found at Met-1. Phosphothreonine is present on Thr-22. Tyr-172 serves as the catalytic Proton acceptor. Lys-176 is an NAD(+) binding site. Residues 298–318 form a helical membrane-spanning segment; it reads WVAYYLALLLSLLVMVISPVI. A Prevents secretion from ER motif is present at residues 370 to 373; sequence RRVK.

The protein belongs to the 3-beta-HSD family. Homodimer. Brain, heart, liver, lung, kidney, skin and placenta.

Its subcellular location is the endoplasmic reticulum membrane. The protein resides in the lipid droplet. It catalyses the reaction a 3beta-hydroxysteroid-4alpha-carboxylate + NADP(+) = a 3-oxosteroid + CO2 + NADPH. The enzyme catalyses a 3beta-hydroxysteroid-4alpha-carboxylate + NAD(+) = a 3-oxosteroid + CO2 + NADH. It carries out the reaction 4alpha-carboxyzymosterol + NADP(+) = zymosterone + CO2 + NADPH. The catalysed reaction is 4alpha-carboxy-4beta-methyl-5alpha-cholest-8-en-3beta-ol + NADP(+) = 4alpha-methyl-5alpha-cholest-8-en-3-one + CO2 + NADPH. It catalyses the reaction 4alpha-carboxy-5alpha-cholest-8-ene-3beta-ol + NADP(+) = 5alpha-cholest-8-en-3-one + CO2 + NADPH. The enzyme catalyses 4beta-methylzymosterol-4alpha-carboxylate + NADP(+) = 3-dehydro-4-methylzymosterol + CO2 + NADPH. It carries out the reaction 4beta-methylzymosterol-4alpha-carboxylate + NAD(+) = 3-dehydro-4-methylzymosterol + CO2 + NADH. The catalysed reaction is 4alpha-carboxy-5alpha-cholest-8-ene-3beta-ol + NAD(+) = 5alpha-cholest-8-en-3-one + CO2 + NADH. It catalyses the reaction 4alpha-carboxy-4beta-methyl-5alpha-cholest-8-en-3beta-ol + NAD(+) = 4alpha-methyl-5alpha-cholest-8-en-3-one + CO2 + NADH. The enzyme catalyses 4alpha-carboxyzymosterol + NAD(+) = zymosterone + CO2 + NADH. The protein operates within steroid biosynthesis; zymosterol biosynthesis; zymosterol from lanosterol: step 4/6. Catalyzes the NAD(P)(+)-dependent oxidative decarboxylation of the C4 methyl groups of 4-alpha-carboxysterols in post-squalene cholesterol biosynthesis. Also plays a role in the regulation of the endocytic trafficking of EGFR. The polypeptide is Sterol-4-alpha-carboxylate 3-dehydrogenase, decarboxylating (NSDHL) (Homo sapiens (Human)).